Here is a 300-residue protein sequence, read N- to C-terminus: Aspartate carbamoyltransferase catalytic subunit (300 aa).

Residues R50 and T51 each contribute to the carbamoyl phosphate site. L-aspartate is bound at residue K78. Carbamoyl phosphate-binding residues include R100, H127, and Q130. Positions 160 and 210 each coordinate L-aspartate. Carbamoyl phosphate contacts are provided by A253 and P254.

It belongs to the aspartate/ornithine carbamoyltransferase superfamily. ATCase family. As to quaternary structure, heterododecamer (2C3:3R2) of six catalytic PyrB chains organized as two trimers (C3), and six regulatory PyrI chains organized as three dimers (R2).

The enzyme catalyses carbamoyl phosphate + L-aspartate = N-carbamoyl-L-aspartate + phosphate + H(+). It participates in pyrimidine metabolism; UMP biosynthesis via de novo pathway; (S)-dihydroorotate from bicarbonate: step 2/3. Functionally, catalyzes the condensation of carbamoyl phosphate and aspartate to form carbamoyl aspartate and inorganic phosphate, the committed step in the de novo pyrimidine nucleotide biosynthesis pathway. The protein is Aspartate carbamoyltransferase catalytic subunit of Staphylococcus saprophyticus subsp. saprophyticus (strain ATCC 15305 / DSM 20229 / NCIMB 8711 / NCTC 7292 / S-41).